We begin with the raw amino-acid sequence, 20 residues long: Blooming-related protein 2 (20 aa).

Positions 1-20 (VSAEYLERQGPKDDXDCFDD) are disordered.

Its function is as follows. Possible 'checkpoint' protein for cell division in the blooming process. The polypeptide is Blooming-related protein 2 (Prorocentrum triestinum (Red tide alga)).